The sequence spans 87 residues: Potassium channel toxin Ttr-beta-KTx (87 aa).

Residues 1-19 (MERKWALLLFLGMVTLVSC) form the signal peptide. The propeptide occupies 20-27 (GLREKHVQ). The BetaSPN-type CS-alpha/beta domain occupies 53–87 (QFGCPAYEGYCNNHCQDIKRKDGECHGFKCKCAKD). Intrachain disulfides connect cysteine 56-cysteine 77, cysteine 63-cysteine 82, and cysteine 67-cysteine 84.

Belongs to the long chain scorpion toxin family. Class 1 subfamily. As to expression, expressed by the venom gland.

It is found in the secreted. Functionally, inhibits voltage-gated potassium channel. In Tityus trivittatus (Argentinean scorpion), this protein is Potassium channel toxin Ttr-beta-KTx.